The primary structure comprises 373 residues: Probable G-protein coupled receptor 173 (373 aa).

At M1–L26 the chain is on the extracellular side. Residue N3 is glycosylated (N-linked (GlcNAc...) asparagine). Residues V27–V47 traverse the membrane as a helical segment. The Cytoplasmic segment spans residues L48–Y59. Residues F60–L80 form a helical membrane-spanning segment. At A81–K97 the chain is on the extracellular side. Residues C96 and C174 are joined by a disulfide bond. The helical transmembrane segment at I98–S118 threads the bilayer. Residues V119 to T139 lie on the Cytoplasmic side of the membrane. A helical membrane pass occupies residues C140–F160. Residues D161–G188 lie on the Extracellular side of the membrane. N184 is a glycosylation site (N-linked (GlcNAc...) asparagine). The helical transmembrane segment at F189–L209 threads the bilayer. Topologically, residues F210–M287 are cytoplasmic. A helical transmembrane segment spans residues F288–W308. At R309 to L322 the chain is on the extracellular side. Residues A323 to L343 form a helical membrane-spanning segment. The Cytoplasmic portion of the chain corresponds to N344–M373.

It belongs to the G-protein coupled receptor 1 family. In terms of tissue distribution, expressed in the ovary, specifically in granulosa cells of follicles that have passed the primary stage and in oocytes (at protein level). Expressed at high levels in brain. Lower levels in small intestine. In brain regions, detected in all regions tested. Highest levels in the cerebellum and cerebral cortex.

It is found in the cell membrane. Is a receptor for the SMIM20 derived peptides Phoenixin-14 and Phoenixin-20. It mediates the Phoenixin-14 and Phoenixin-20 augmentation of gonadotropin-releasing hormone (GNRH) signaling in the hypothalamus and pituitary gland. In the ovary, it mediates the effects of Phoenixin-14 and Phoenixin-20 induced granulosa cell proliferation during follicular growth. This chain is Probable G-protein coupled receptor 173 (GPR173), found in Homo sapiens (Human).